A 475-amino-acid polypeptide reads, in one-letter code: Adenosylhomocysteinase (475 aa).

Positions 66, 141, and 201 each coordinate substrate. An NAD(+)-binding site is contributed by 202–204 (TTT). Lysine 231 and aspartate 235 together coordinate substrate. Residues asparagine 236, 265–270 (GYGEVG), glutamate 288, asparagine 323, 344–346 (IGH), and asparagine 389 contribute to the NAD(+) site.

This sequence belongs to the adenosylhomocysteinase family. NAD(+) serves as cofactor.

The protein resides in the cytoplasm. It catalyses the reaction S-adenosyl-L-homocysteine + H2O = L-homocysteine + adenosine. It functions in the pathway amino-acid biosynthesis; L-homocysteine biosynthesis; L-homocysteine from S-adenosyl-L-homocysteine: step 1/1. May play a key role in the regulation of the intracellular concentration of adenosylhomocysteine. This Geobacter sulfurreducens (strain ATCC 51573 / DSM 12127 / PCA) protein is Adenosylhomocysteinase.